The chain runs to 911 residues: DNA ligase 4 (911 aa).

Residues Glu-271, Thr-272, Lys-273, Leu-274, Arg-278, Glu-331, Lys-345, Phe-367, Glu-427, Lys-432, Lys-449, and Lys-451 each coordinate ATP. Lys-273 (N6-AMP-lysine intermediate) is an active-site residue. Position 331 (Glu-331) interacts with Mg(2+). Residue Glu-427 participates in Mg(2+) binding. The segment at 610–620 is required for catalytic activity; the sequence is LASKHLYIGGD. BRCT domains lie at 654-743 and 808-911; these read KISN…PRFM and SPLS…QYLI.

The protein belongs to the ATP-dependent DNA ligase family. Interacts with XRCC4; the LIG4-XRCC4 subcomplex has a 1:2 stoichiometry and XRCC4 is required for LIG4 stability. Component of the core long-range non-homologous end joining (NHEJ) complex (also named DNA-PK complex) composed of PRKDC, LIG4, XRCC4, XRCC6/Ku70, XRCC5/Ku86 and NHEJ1/XLF. Additional component of the NHEJ complex includes PAXX. Following autophosphorylation, PRKDC dissociates from DNA, leading to formation of the short-range NHEJ complex, composed of LIG4, XRCC4, XRCC6/Ku70, XRCC5/Ku86 and NHEJ1/XLF. Interacts with DCLRE1C; the interaction is direct. Interacts with APLF. Requires Mg(2+) as cofactor. Testis, thymus, prostate and heart.

Its subcellular location is the nucleus. The enzyme catalyses ATP + (deoxyribonucleotide)n-3'-hydroxyl + 5'-phospho-(deoxyribonucleotide)m = (deoxyribonucleotide)n+m + AMP + diphosphate.. In terms of biological role, DNA ligase involved in DNA non-homologous end joining (NHEJ); required for double-strand break (DSB) repair and V(D)J recombination. Catalyzes the NHEJ ligation step of the broken DNA during DSB repair by resealing the DNA breaks after the gap filling is completed. Joins single-strand breaks in a double-stranded polydeoxynucleotide in an ATP-dependent reaction. LIG4 is mechanistically flexible: it can ligate nicks as well as compatible DNA overhangs alone, while in the presence of XRCC4, it can ligate ends with 2-nucleotides (nt) microhomology and 1-nt gaps. Forms a subcomplex with XRCC4; the LIG4-XRCC4 subcomplex is responsible for the NHEJ ligation step and XRCC4 enhances the joining activity of LIG4. Binding of the LIG4-XRCC4 complex to DNA ends is dependent on the assembly of the DNA-dependent protein kinase complex DNA-PK to these DNA ends. LIG4 regulates nuclear localization of XRCC4. This chain is DNA ligase 4, found in Homo sapiens (Human).